Reading from the N-terminus, the 178-residue chain is uncharacterized protein (178 aa).

A helical transmembrane segment spans residues 7–27 (LAIGTAILLIGMAYWTVSIVE).

The protein localises to the membrane. This is an uncharacterized protein from Methanocaldococcus jannaschii (strain ATCC 43067 / DSM 2661 / JAL-1 / JCM 10045 / NBRC 100440) (Methanococcus jannaschii).